The sequence spans 372 residues: Queuine tRNA-ribosyltransferase (372 aa).

The active-site Proton acceptor is the Asp-92. Substrate contacts are provided by residues 92–96 (DSGGY), Asp-146, Gln-188, and Gly-215. The RNA binding stretch occupies residues 246 to 252 (GIGSLKE). Asp-265 (nucleophile) is an active-site residue. Residues 270-274 (TRLGR) are RNA binding; important for wobble base 34 recognition. Positions 303, 305, 308, and 334 each coordinate Zn(2+).

It belongs to the queuine tRNA-ribosyltransferase family. In terms of assembly, homodimer. Within each dimer, one monomer is responsible for RNA recognition and catalysis, while the other monomer binds to the replacement base PreQ1. Zn(2+) is required as a cofactor.

It catalyses the reaction 7-aminomethyl-7-carbaguanine + guanosine(34) in tRNA = 7-aminomethyl-7-carbaguanosine(34) in tRNA + guanine. Its pathway is tRNA modification; tRNA-queuosine biosynthesis. Its function is as follows. Catalyzes the base-exchange of a guanine (G) residue with the queuine precursor 7-aminomethyl-7-deazaguanine (PreQ1) at position 34 (anticodon wobble position) in tRNAs with GU(N) anticodons (tRNA-Asp, -Asn, -His and -Tyr). Catalysis occurs through a double-displacement mechanism. The nucleophile active site attacks the C1' of nucleotide 34 to detach the guanine base from the RNA, forming a covalent enzyme-RNA intermediate. The proton acceptor active site deprotonates the incoming PreQ1, allowing a nucleophilic attack on the C1' of the ribose to form the product. After dissociation, two additional enzymatic reactions on the tRNA convert PreQ1 to queuine (Q), resulting in the hypermodified nucleoside queuosine (7-(((4,5-cis-dihydroxy-2-cyclopenten-1-yl)amino)methyl)-7-deazaguanosine). The sequence is that of Queuine tRNA-ribosyltransferase from Prochlorococcus marinus (strain MIT 9301).